Consider the following 379-residue polypeptide: Queuine tRNA-ribosyltransferase (379 aa).

The active-site Proton acceptor is D94. Substrate-binding positions include 94 to 98, D148, Q191, and G218; that span reads DSGGF. The RNA binding stretch occupies residues 249 to 255; the sequence is GVGSPDA. D268 (nucleophile) is an active-site residue. The tract at residues 273 to 277 is RNA binding; important for wobble base 34 recognition; the sequence is TRIAR. Residues C306, C308, C311, and H337 each coordinate Zn(2+).

This sequence belongs to the queuine tRNA-ribosyltransferase family. As to quaternary structure, homodimer. Within each dimer, one monomer is responsible for RNA recognition and catalysis, while the other monomer binds to the replacement base PreQ1. Zn(2+) is required as a cofactor.

It catalyses the reaction 7-aminomethyl-7-carbaguanine + guanosine(34) in tRNA = 7-aminomethyl-7-carbaguanosine(34) in tRNA + guanine. Its pathway is tRNA modification; tRNA-queuosine biosynthesis. Catalyzes the base-exchange of a guanine (G) residue with the queuine precursor 7-aminomethyl-7-deazaguanine (PreQ1) at position 34 (anticodon wobble position) in tRNAs with GU(N) anticodons (tRNA-Asp, -Asn, -His and -Tyr). Catalysis occurs through a double-displacement mechanism. The nucleophile active site attacks the C1' of nucleotide 34 to detach the guanine base from the RNA, forming a covalent enzyme-RNA intermediate. The proton acceptor active site deprotonates the incoming PreQ1, allowing a nucleophilic attack on the C1' of the ribose to form the product. After dissociation, two additional enzymatic reactions on the tRNA convert PreQ1 to queuine (Q), resulting in the hypermodified nucleoside queuosine (7-(((4,5-cis-dihydroxy-2-cyclopenten-1-yl)amino)methyl)-7-deazaguanosine). This Staphylococcus haemolyticus (strain JCSC1435) protein is Queuine tRNA-ribosyltransferase.